A 202-amino-acid chain; its full sequence is MFPKPLVILAHEIYGVNSHMKKMGRLIKMAGYDVLTPNLLGEDEVYTLKEEKTAYEQFTKHERLKTGETIIQNVIRQNAGRHIFVIGFSVGATIAWKCSSMPEVSGSVCYYGSRIRDSLHHMPACPVLLFFPNYEPSFDVALLIKKLREKQHTHLEIYQFDALHGFANPDSVYFNRALFFKTLSIIKNGAESRLRTVSSSFF.

This sequence belongs to the dienelactone hydrolase family.

This is an uncharacterized protein from Bacillus subtilis (strain 168).